A 217-amino-acid chain; its full sequence is Ribosomal RNA small subunit methyltransferase G (217 aa).

Residues Gly-78, Phe-83, 129-130, and Arg-146 each bind S-adenosyl-L-methionine; that span reads AE.

It belongs to the methyltransferase superfamily. RNA methyltransferase RsmG family.

It is found in the cytoplasm. It carries out the reaction guanosine(527) in 16S rRNA + S-adenosyl-L-methionine = N(7)-methylguanosine(527) in 16S rRNA + S-adenosyl-L-homocysteine. Specifically methylates the N7 position of guanine in position 527 of 16S rRNA. The chain is Ribosomal RNA small subunit methyltransferase G from Geobacter sp. (strain M21).